The following is a 143-amino-acid chain: Subtelomeric hrmA-associated cluster protein cgnA (143 aa).

29 G-Q-I/R/S repeats span residues 11–13 (GQI), 14–16 (GPI), 17–19 (GQR), 20–22 (GQS), 23–25 (GQR), 26–28 (GQS), 29–31 (GQR), 32–34 (GQS), 35–37 (GQI), 38–40 (GQS), 41–43 (GQS), 44–46 (GQS), 47–49 (GQI), 50–52 (GQI), 53–55 (GQI), 56–58 (GQI), 59–61 (GQI), 62–64 (GQI), 65–67 (GQI), 68–70 (GQI), 71–73 (GQI), 74–76 (GQI), 77–79 (GQI), 80–82 (GQI), 83–85 (GQI), 86–88 (GQI), 89–91 (GQI), 92–94 (GQI), and 95–97 (GQA). The region spanning 11–68 (GQIGPIGQRGQSGQRGQSGQRGQSGQIGQSGQSGQSGQIGQIGQIGQIGQIGQIGQIG) is the Collagen-like domain. Residues 11 to 97 (GQIGPIGQRG…IGQIGQIGQA (87 aa)) form a 29 X 3 AA approximate tandem repeats of G-Q-I/R/S region. Residues 16–49 (IGQRGQSGQRGQSGQRGQSGQIGQSGQSGQSGQI) are disordered.

It localises to the secreted. Collagen-like protein; part of the subtelomeric hrmA-associated cluster (HAC) containing genes that alter the hyphal surface (such as reduced total chitin or increased beta-glucan exposure) and perturb inter-hyphal interactions within the developing biofilms, resulting in a loss of vertically aligned polarized growing filaments. Consequently, this hypoxia-typic morphotype (called H-MORPH) with altered biofilm architecture leads to increased hypoxia fitness, increased host inflammation, rapid disease progression, and mortality in a murine model of invasive aspergillosis. CgnA is directly involved in the reduction of total surface chitin and the increase of beta-glucan exposure, and mediates the detachment of the extracellular matrix and especially of its component galactosaminogalactan (GAG). The protein is Subtelomeric hrmA-associated cluster protein cgnA of Aspergillus fumigatus (strain ATCC MYA-4609 / CBS 101355 / FGSC A1100 / Af293) (Neosartorya fumigata).